A 192-amino-acid polypeptide reads, in one-letter code: Orotate phosphoribosyltransferase (192 aa).

116–124 (EDIVTTGLS) lines the 5-phospho-alpha-D-ribose 1-diphosphate pocket. Residues Thr-120 and Arg-148 each contribute to the orotate site.

This sequence belongs to the purine/pyrimidine phosphoribosyltransferase family. PyrE subfamily. Homodimer. Mg(2+) is required as a cofactor.

It carries out the reaction orotidine 5'-phosphate + diphosphate = orotate + 5-phospho-alpha-D-ribose 1-diphosphate. It functions in the pathway pyrimidine metabolism; UMP biosynthesis via de novo pathway; UMP from orotate: step 1/2. Catalyzes the transfer of a ribosyl phosphate group from 5-phosphoribose 1-diphosphate to orotate, leading to the formation of orotidine monophosphate (OMP). In Bartonella bacilliformis (strain ATCC 35685 / KC583 / Herrer 020/F12,63), this protein is Orotate phosphoribosyltransferase.